Consider the following 193-residue polypeptide: Holliday junction branch migration complex subunit RuvA (193 aa).

A domain I region spans residues methionine 1–alanine 64. A domain II region spans residues threonine 65–proline 144. The tract at residues leucine 145–aspartate 151 is flexible linker. Positions aspartate 151 to glycine 193 are domain III.

It belongs to the RuvA family. Homotetramer. Forms an RuvA(8)-RuvB(12)-Holliday junction (HJ) complex. HJ DNA is sandwiched between 2 RuvA tetramers; dsDNA enters through RuvA and exits via RuvB. An RuvB hexamer assembles on each DNA strand where it exits the tetramer. Each RuvB hexamer is contacted by two RuvA subunits (via domain III) on 2 adjacent RuvB subunits; this complex drives branch migration. In the full resolvosome a probable DNA-RuvA(4)-RuvB(12)-RuvC(2) complex forms which resolves the HJ.

It localises to the cytoplasm. Its function is as follows. The RuvA-RuvB-RuvC complex processes Holliday junction (HJ) DNA during genetic recombination and DNA repair, while the RuvA-RuvB complex plays an important role in the rescue of blocked DNA replication forks via replication fork reversal (RFR). RuvA specifically binds to HJ cruciform DNA, conferring on it an open structure. The RuvB hexamer acts as an ATP-dependent pump, pulling dsDNA into and through the RuvAB complex. HJ branch migration allows RuvC to scan DNA until it finds its consensus sequence, where it cleaves and resolves the cruciform DNA. The protein is Holliday junction branch migration complex subunit RuvA of Cupriavidus metallidurans (strain ATCC 43123 / DSM 2839 / NBRC 102507 / CH34) (Ralstonia metallidurans).